A 314-amino-acid chain; its full sequence is 4-hydroxy-3-methylbut-2-enyl diphosphate reductase (314 aa).

Cys-12 contacts [4Fe-4S] cluster. The (2E)-4-hydroxy-3-methylbut-2-enyl diphosphate site is built by His-43 and His-81. The dimethylallyl diphosphate site is built by His-43 and His-81. Residues His-43 and His-81 each contribute to the isopentenyl diphosphate site. Cys-103 serves as a coordination point for [4Fe-4S] cluster. His-131 lines the (2E)-4-hydroxy-3-methylbut-2-enyl diphosphate pocket. His-131 provides a ligand contact to dimethylallyl diphosphate. His-131 is an isopentenyl diphosphate binding site. The active-site Proton donor is Glu-133. Thr-170 lines the (2E)-4-hydroxy-3-methylbut-2-enyl diphosphate pocket. Cys-198 contributes to the [4Fe-4S] cluster binding site. (2E)-4-hydroxy-3-methylbut-2-enyl diphosphate contacts are provided by Ser-226, Asn-228, and Ser-271. Dimethylallyl diphosphate contacts are provided by Ser-226, Asn-228, and Ser-271. Isopentenyl diphosphate is bound by residues Ser-226, Asn-228, and Ser-271.

Belongs to the IspH family. [4Fe-4S] cluster is required as a cofactor.

The enzyme catalyses isopentenyl diphosphate + 2 oxidized [2Fe-2S]-[ferredoxin] + H2O = (2E)-4-hydroxy-3-methylbut-2-enyl diphosphate + 2 reduced [2Fe-2S]-[ferredoxin] + 2 H(+). The catalysed reaction is dimethylallyl diphosphate + 2 oxidized [2Fe-2S]-[ferredoxin] + H2O = (2E)-4-hydroxy-3-methylbut-2-enyl diphosphate + 2 reduced [2Fe-2S]-[ferredoxin] + 2 H(+). The protein operates within isoprenoid biosynthesis; dimethylallyl diphosphate biosynthesis; dimethylallyl diphosphate from (2E)-4-hydroxy-3-methylbutenyl diphosphate: step 1/1. It participates in isoprenoid biosynthesis; isopentenyl diphosphate biosynthesis via DXP pathway; isopentenyl diphosphate from 1-deoxy-D-xylulose 5-phosphate: step 6/6. Its function is as follows. Catalyzes the conversion of 1-hydroxy-2-methyl-2-(E)-butenyl 4-diphosphate (HMBPP) into a mixture of isopentenyl diphosphate (IPP) and dimethylallyl diphosphate (DMAPP). Acts in the terminal step of the DOXP/MEP pathway for isoprenoid precursor biosynthesis. The chain is 4-hydroxy-3-methylbut-2-enyl diphosphate reductase from Bacillus licheniformis (strain ATCC 14580 / DSM 13 / JCM 2505 / CCUG 7422 / NBRC 12200 / NCIMB 9375 / NCTC 10341 / NRRL NRS-1264 / Gibson 46).